A 512-amino-acid chain; its full sequence is ETS translocation variant 3 (512 aa).

A DNA-binding region (ETS) is located at residues 35 to 116 (IQLWHFILEL…KGKRFTYKFN (82 aa)). The segment at 136-222 (VPQSAPPVPT…NAIGGGGIGH (87 aa)) is disordered. Phosphoserine occurs at positions 139, 159, and 315. Positions 158 to 184 (HSPTNDVQPGRFSASSLTASGQESSNG) are enriched in polar residues. The interval 336–512 (PEESTQFSIK…QGLATAAADA (177 aa)) is disordered. Residues 380–406 (IKVEPASEKDPESLRQSAREKEEHTQE) show a composition bias toward basic and acidic residues. A Glycyl lysine isopeptide (Lys-Gly) (interchain with G-Cter in SUMO2) cross-link involves residue K381. K388 carries the N6-acetyllysine; alternate modification. K388 participates in a covalent cross-link: Glycyl lysine isopeptide (Lys-Gly) (interchain with G-Cter in SUMO2); alternate. Residues 443–452 (EPLEVTEDIE) show a composition bias toward acidic residues. Composition is skewed to basic and acidic residues over residues 453–468 (DRPG…KEDA) and 479–491 (RWND…ELSK).

It belongs to the ETS family.

It is found in the nucleus. Transcriptional repressor that contribute to growth arrest during terminal macrophage differentiation by repressing target genes involved in Ras-dependent proliferation. Represses MMP1 promoter activity. The chain is ETS translocation variant 3 (ETV3) from Pan paniscus (Pygmy chimpanzee).